Consider the following 463-residue polypeptide: L-seryl-tRNA(Sec) selenium transferase (463 aa).

An N6-(pyridoxal phosphate)lysine modification is found at K295.

It belongs to the SelA family. Homodecamer; pentamer of dimers. Binds only one seryl-tRNA(Sec) per dimer. The cofactor is pyridoxal 5'-phosphate.

Its subcellular location is the cytoplasm. It carries out the reaction L-seryl-tRNA(Sec) + selenophosphate + H(+) = L-selenocysteinyl-tRNA(Sec) + phosphate. Its pathway is aminoacyl-tRNA biosynthesis; selenocysteinyl-tRNA(Sec) biosynthesis; selenocysteinyl-tRNA(Sec) from L-seryl-tRNA(Sec) (bacterial route): step 1/1. Converts seryl-tRNA(Sec) to selenocysteinyl-tRNA(Sec) required for selenoprotein biosynthesis. This Shigella flexneri serotype 5b (strain 8401) protein is L-seryl-tRNA(Sec) selenium transferase.